The chain runs to 168 residues: Small ribosomal subunit protein uS5 (168 aa).

One can recognise an S5 DRBM domain in the interval 13-76 (LKEQVVDIKR…EDAKKNLIHV (64 aa)).

Belongs to the universal ribosomal protein uS5 family. In terms of assembly, part of the 30S ribosomal subunit. Contacts proteins S4 and S8.

Functionally, with S4 and S12 plays an important role in translational accuracy. Located at the back of the 30S subunit body where it stabilizes the conformation of the head with respect to the body. The chain is Small ribosomal subunit protein uS5 from Alkaliphilus oremlandii (strain OhILAs) (Clostridium oremlandii (strain OhILAs)).